Here is a 414-residue protein sequence, read N- to C-terminus: Serine hydroxymethyltransferase (414 aa).

(6S)-5,6,7,8-tetrahydrofolate contacts are provided by residues leucine 121 and 125–127; that span reads GHL. Lysine 229 bears the N6-(pyridoxal phosphate)lysine mark.

This sequence belongs to the SHMT family. Homodimer. The cofactor is pyridoxal 5'-phosphate.

It is found in the cytoplasm. It catalyses the reaction (6R)-5,10-methylene-5,6,7,8-tetrahydrofolate + glycine + H2O = (6S)-5,6,7,8-tetrahydrofolate + L-serine. Its pathway is one-carbon metabolism; tetrahydrofolate interconversion. It participates in amino-acid biosynthesis; glycine biosynthesis; glycine from L-serine: step 1/1. In terms of biological role, catalyzes the reversible interconversion of serine and glycine with tetrahydrofolate (THF) serving as the one-carbon carrier. This reaction serves as the major source of one-carbon groups required for the biosynthesis of purines, thymidylate, methionine, and other important biomolecules. Also exhibits THF-independent aldolase activity toward beta-hydroxyamino acids, producing glycine and aldehydes, via a retro-aldol mechanism. The sequence is that of Serine hydroxymethyltransferase from Herminiimonas arsenicoxydans.